The following is a 662-amino-acid chain: ATP-dependent zinc metalloprotease YME1 homolog (662 aa).

206 to 213 contributes to the ATP binding site; sequence GPPGVGKT. His-425 serves as a coordination point for Zn(2+). The active site involves Glu-426. Zn(2+) is bound by residues His-429 and Asp-503.

The protein in the N-terminal section; belongs to the AAA ATPase family. This sequence in the C-terminal section; belongs to the peptidase M41 family. Zn(2+) serves as cofactor.

Functionally, putative ATP-dependent protease. The sequence is that of ATP-dependent zinc metalloprotease YME1 homolog from Schistosoma mansoni (Blood fluke).